Here is a 739-residue protein sequence, read N- to C-terminus: Lysine decarboxylase (739 aa).

N6-(pyridoxal phosphate)lysine is present on lysine 367. A compositionally biased stretch (basic and acidic residues) spans 714–726 (ADEPGDKPSDTVK). The disordered stretch occupies residues 714 to 739 (ADEPGDKPSDTVKKAPGKKPSAAKKS). The span at 728 to 739 (APGKKPSAAKKS) shows a compositional bias: basic residues.

The protein belongs to the Orn/Lys/Arg decarboxylase class-I family. Pyridoxal 5'-phosphate serves as cofactor.

Its subcellular location is the cytoplasm. The catalysed reaction is L-lysine + H(+) = cadaverine + CO2. The chain is Lysine decarboxylase from Hafnia alvei.